The following is a 441-amino-acid chain: MSKSIVAVVGRPNVGKSTLFNALAGDRISIVKDTPGVTRDRIYADITWLDKQFTLVDTGGIEPESKDMMLTYMREQAEIAIATADVIMFVVDVRQGLLDADNKVADMLRRSGKPVILVVNKVDNFDKFMPDVYEFYNLGIGDPVPVSAASMLGFGDLLDLVVGHFPPEALEEEEDERPRIAIVGKPNVGKSSIINKLLGENRVIVSDVAGTTRDAIDTAVTWNKKDYVFIDTAGLRRKSKIKEELERFSIIRTVSAVERADVVVVVIDANEGVTEQDAKIAGIAHERGKGIIIAVNKWDAIEKDDKTIYKYTNRIREILSFLPYAEIMFLSAKTGQRVTKLFDSIEVVIQNRNLRISTGVLNEIMMEATALQQPPSDKGKRLRLYYITQVAVKPPTFVIFVNDKELMHYSYTRYIENKIREAFGFSGTSLKFFIRERKEND.

EngA-type G domains lie at Ser-4–Ala-169 and Pro-178–Asn-353. GTP-binding positions include Gly-10 to Ser-17, Asp-57 to Ile-61, Asn-120 to Asp-123, Gly-184 to Ser-191, Asp-231 to Leu-235, and Asn-296 to Asp-299. Residues Leu-354 to Lys-438 form the KH-like domain.

The protein belongs to the TRAFAC class TrmE-Era-EngA-EngB-Septin-like GTPase superfamily. EngA (Der) GTPase family. As to quaternary structure, associates with the 50S ribosomal subunit.

In terms of biological role, GTPase that plays an essential role in the late steps of ribosome biogenesis. The protein is GTPase Der of Lachnoclostridium phytofermentans (strain ATCC 700394 / DSM 18823 / ISDg) (Clostridium phytofermentans).